Consider the following 432-residue polypeptide: MSNSKLVKINGPLVGEIEVPGDKSMTHRAIMLGSLATGKSTIYKPLLGEDCLRTVEIFKLLGVQIEVNEDKIEIDSPGYKYFKTPHQVLYTGNSGTTTRLVAGLLCGLGIETVLSGDESIGKRPMDRIMKPLRYMNANITGINDNYTPLIIKPASISGITYEMEVASAQVKSAILFASLFANEPTKIKEFDTTRNHTETMFEHFNIPVAVNNDIIEMPSLGIEHIKPADFHVPGDISSAAYFIVAGLITPGSDITIHNVGINPTRSGIIDIVTQMEGNITLFNQTDNPEPTASIRVQYSPNMKPIHIDGDLVPRAIDEIPIVALLCTQANGTSIVKEAEELKVKETNRIDTTANMLNLLGFTLQPTNDGLIIHPSAFEQTATVNSFTDHRIGMMLAIASLLSNEALPIEQFDAVNVSFPGFLPKLKQLEKEG.

Positions 23, 24, and 28 each coordinate 3-phosphoshikimate. Lysine 23 provides a ligand contact to phosphoenolpyruvate. Phosphoenolpyruvate-binding residues include glycine 95 and arginine 123. 3-phosphoshikimate contacts are provided by serine 167, glutamine 169, aspartate 317, and lysine 344. Glutamine 169 contributes to the phosphoenolpyruvate binding site. Residue aspartate 317 is the Proton acceptor of the active site. 2 residues coordinate phosphoenolpyruvate: arginine 348 and arginine 390.

This sequence belongs to the EPSP synthase family. As to quaternary structure, monomer.

Its subcellular location is the cytoplasm. The catalysed reaction is 3-phosphoshikimate + phosphoenolpyruvate = 5-O-(1-carboxyvinyl)-3-phosphoshikimate + phosphate. The protein operates within metabolic intermediate biosynthesis; chorismate biosynthesis; chorismate from D-erythrose 4-phosphate and phosphoenolpyruvate: step 6/7. Catalyzes the transfer of the enolpyruvyl moiety of phosphoenolpyruvate (PEP) to the 5-hydroxyl of shikimate-3-phosphate (S3P) to produce enolpyruvyl shikimate-3-phosphate and inorganic phosphate. This chain is 3-phosphoshikimate 1-carboxyvinyltransferase, found in Staphylococcus saprophyticus subsp. saprophyticus (strain ATCC 15305 / DSM 20229 / NCIMB 8711 / NCTC 7292 / S-41).